Here is a 464-residue protein sequence, read N- to C-terminus: Elongation factor 1-alpha (464 aa).

In terms of domain architecture, tr-type G spans 5 to 242 (KTHINIVVIG…DSVVPPQRPT (238 aa)). Residues 14-21 (GHVDSGKS), 91-95 (DAPGH), and 153-156 (NKMD) each bind GTP. 5-glutamyl glycerylphosphorylethanolamine is present on residues Glu301 and Glu374.

Belongs to the TRAFAC class translation factor GTPase superfamily. Classic translation factor GTPase family. EF-Tu/EF-1A subfamily.

It localises to the cytoplasm. Its function is as follows. This protein promotes the GTP-dependent binding of aminoacyl-tRNA to the A-site of ribosomes during protein biosynthesis. This is Elongation factor 1-alpha from Onchocerca volvulus.